A 1638-amino-acid chain; its full sequence is Non-structural polyprotein 1AB (1638 aa).

A coiled-coil region spans residues 130 to 222; it reads LVHQVMEKTR…KEKENALVSV (93 aa). 6 consecutive transmembrane segments (helical) span residues 220–240, 379–398, 407–427, 437–457, 479–499, and 507–527; these read VSVGWDLLGWIVISVLVFGLI, VMSYRLDMWITSIFSLVLAG, APFIFVAWFLNIPVFLTCVAV, FILFQIFMPQFVLVNAFLLWL, ALVYTIGFVLWSLGLAVGVTL, and ILMFCVVAAAICGTKFACTTI. Active-site charge relay system; for serine protease activity residues include His-600, Asp-632, and Ser-697. Positions 758–788 form a coiled coil; the sequence is KVSHAAILKELEELREEVQFLKKKCVTYDDY. An O-(5'-phospho-RNA)-tyrosine modification is found at Tyr-834. A RdRp catalytic domain is found at 1381–1515; that stretch reads RYFVEMDWTR…SIRKGFVEYE (135 aa).

Belongs to the astroviridae polyprotein 1AB family. As to quaternary structure, monomer. Post-translationally, cleaved by the viral and host proteases. The protease is probably autocatalytically cleaved.

It is found in the host membrane. The catalysed reaction is RNA(n) + a ribonucleoside 5'-triphosphate = RNA(n+1) + diphosphate. Responsible for the cleavage of the polyprotein into functional products. In terms of biological role, protein covalently attached to the 5' extremity of the genomic and subgenomic RNAs. It may serve as a primer for the replicase. The polypeptide is Non-structural polyprotein 1AB (ORF1) (Turkey astrovirus 2 (TAstV-2)).